The primary structure comprises 1217 residues: Sterol 3-beta-glucosyltransferase (1217 aa).

The GRAM 1 domain maps to 195-232 (EFVRKYFGISEEETLIGHYTGWLLQEVLIQGNLFITNS). One can recognise a PH domain in the interval 246-343 (AVVLCGKLKL…WVKCLKKQLF (98 aa)). The GRAM 2 domain maps to 590 to 656 (AKIKDWFNLH…EDIEGYNEIL (67 aa)). Positions 766, 767, 769, 1042, 1072, 1074, 1087, 1090, 1091, 1092, 1111, and 1112 each coordinate UDP-alpha-D-glucose.

It belongs to the glycosyltransferase 28 family.

Its subcellular location is the cytoplasm. The protein resides in the membrane. It carries out the reaction a sterol + UDP-alpha-D-glucose = a sterol 3-beta-D-glucoside + UDP + H(+). It catalyses the reaction ergosterol + UDP-alpha-D-glucose = ergosteryl 3-beta-D-glucoside + UDP + H(+). Functionally, sterol glycosyltransferase responsible for the glycosylation of ergosterol to form ergosterol-glucoside. The polypeptide is Sterol 3-beta-glucosyltransferase (Vanderwaltozyma polyspora (strain ATCC 22028 / DSM 70294 / BCRC 21397 / CBS 2163 / NBRC 10782 / NRRL Y-8283 / UCD 57-17) (Kluyveromyces polysporus)).